The chain runs to 245 residues: Phycocyanobilin:ferredoxin oxidoreductase (245 aa).

Belongs to the HY2 family.

It catalyses the reaction (2R,3Z)-phycocyanobilin + 4 oxidized [2Fe-2S]-[ferredoxin] = biliverdin IXalpha + 4 reduced [2Fe-2S]-[ferredoxin] + 4 H(+). Functionally, catalyzes the four-electron reduction of biliverdin IX-alpha (2-electron reduction at both the A and D rings); the reaction proceeds via an isolatable 2-electron intermediate, 181,182-dihydrobiliverdin. The protein is Phycocyanobilin:ferredoxin oxidoreductase (pcyA) of Nostoc punctiforme (strain ATCC 29133 / PCC 73102).